The chain runs to 247 residues: Transmembrane protein 33 (247 aa).

N-acetylalanine is present on Ala-2. The Lumenal portion of the chain corresponds to 2-31; sequence ADTTPNGPQGAGAVQFMMTNKLDTAMWLSR. The chain crosses the membrane as a helical span at residues 32–52; that stretch reads LFTVYCSALFVLPLLGLHEAA. Residues 53 to 100 lie on the Cytoplasmic side of the membrane; sequence SFYQRALLANALTSALRLHQRLPHFQLSRAFLAQALLEDSCHYLLYSL. Residues 101–121 traverse the membrane as a helical segment; the sequence is IFVNSYPVTMSIFPVLLFSLL. Residues 122–155 are Lumenal-facing; the sequence is HAATYTKKVLDAKGSNSLPLLRSFLDKLSTNQQN. A helical membrane pass occupies residues 156 to 176; sequence ILKFIACNEIFLMPATVFMLF. The Cytoplasmic segment spans residues 177–247; the sequence is SGQGSLLQPF…FISRLAPTVA (71 aa).

It belongs to the PER33/POM33 family. As to quaternary structure, interacts with EIF2AK3. Interacts with RTN1, RTN2, RTN3, RTN4 and ARL6IP1. Interacts with RNF5. Interacts with RNF26. Interacts with PKD2.

The protein resides in the endoplasmic reticulum membrane. Its subcellular location is the melanosome. The protein localises to the nucleus envelope. Its function is as follows. Acts as a regulator of the tubular endoplasmic reticulum (ER) network by modulating intracellular calcium homeostasis. Mechanistically, stimulates PKD2 calcium-dependent activity. Suppresses the RTN3/4-induced formation of the ER tubules. Positively regulates PERK-mediated and IRE1-mediated unfolded protein response signaling. Plays an essential role in VEGF-mediated release of Ca(2+) from ER stores during angiogenesis. Also plays a role in the modulation of innate immune signaling through the cGAS-STING pathway by interacting with RNF26. Participates in lipid metabolism by acting as a downstream effector of the pyruvate kinase/PKM. Forms a complex with RNF5 to facilitate polyubiquitination and subsequent degradation of SCAP on the ER membrane. The sequence is that of Transmembrane protein 33 (Tmem33) from Mus musculus (Mouse).